The primary structure comprises 279 residues: Oxygen-dependent coproporphyrinogen-III oxidase (279 aa).

Serine 102 is a substrate binding site. 2 residues coordinate a divalent metal cation: histidine 106 and histidine 116. Histidine 116 (proton donor) is an active-site residue. 118-120 (NTR) serves as a coordination point for substrate. A divalent metal cation-binding residues include histidine 149 and histidine 179. The interval 244 to 279 (YVEFNLLYDRGTKFGLMTDGNVEAILMSLPPEVKWA) is important for dimerization.

It belongs to the aerobic coproporphyrinogen-III oxidase family. In terms of assembly, homodimer. A divalent metal cation serves as cofactor.

It localises to the cytoplasm. The catalysed reaction is coproporphyrinogen III + O2 + 2 H(+) = protoporphyrinogen IX + 2 CO2 + 2 H2O. It participates in porphyrin-containing compound metabolism; protoporphyrin-IX biosynthesis; protoporphyrinogen-IX from coproporphyrinogen-III (O2 route): step 1/1. Its function is as follows. Involved in the heme biosynthesis. Catalyzes the aerobic oxidative decarboxylation of propionate groups of rings A and B of coproporphyrinogen-III to yield the vinyl groups in protoporphyrinogen-IX. The protein is Oxygen-dependent coproporphyrinogen-III oxidase of Rickettsia bellii (strain OSU 85-389).